The following is a 170-amino-acid chain: Peptide deformylase (170 aa).

Fe cation is bound by residues Cys88 and His130. The active site involves Glu131. His134 is a binding site for Fe cation.

The protein belongs to the polypeptide deformylase family. Requires Fe(2+) as cofactor.

It catalyses the reaction N-terminal N-formyl-L-methionyl-[peptide] + H2O = N-terminal L-methionyl-[peptide] + formate. Its function is as follows. Removes the formyl group from the N-terminal Met of newly synthesized proteins. Requires at least a dipeptide for an efficient rate of reaction. N-terminal L-methionine is a prerequisite for activity but the enzyme has broad specificity at other positions. This Acetivibrio thermocellus (strain ATCC 27405 / DSM 1237 / JCM 9322 / NBRC 103400 / NCIMB 10682 / NRRL B-4536 / VPI 7372) (Clostridium thermocellum) protein is Peptide deformylase.